We begin with the raw amino-acid sequence, 374 residues long: Hydroxylysine kinase (374 aa).

Asp-228 functions as the Proton acceptor in the catalytic mechanism.

It belongs to the aminoglycoside phosphotransferase family.

It is found in the cytoplasm. It carries out the reaction (5R)-5-hydroxy-L-lysine + GTP = (5R)-5-phosphooxy-L-lysine + GDP + H(+). Functionally, catalyzes the GTP-dependent phosphorylation of 5-hydroxy-L-lysine. This Xenopus laevis (African clawed frog) protein is Hydroxylysine kinase (hykk).